The following is a 205-amino-acid chain: Small ribosomal subunit protein uS4c (205 aa).

Residues 93–154 (MRLDNTIFRL…RTQTIALIQQ (62 aa)) enclose the S4 RNA-binding domain.

It belongs to the universal ribosomal protein uS4 family. Part of the 30S ribosomal subunit. Contacts protein S5. The interaction surface between S4 and S5 is involved in control of translational fidelity.

Its subcellular location is the plastid. The protein localises to the chloroplast. Functionally, one of the primary rRNA binding proteins, it binds directly to 16S rRNA where it nucleates assembly of the body of the 30S subunit. In terms of biological role, with S5 and S12 plays an important role in translational accuracy. The sequence is that of Small ribosomal subunit protein uS4c (rps4) from Chaetosphaeridium globosum (Charophycean green alga).